The sequence spans 820 residues: DNA mismatch repair protein MutS (820 aa).

615–622 (GPNMAGKS) provides a ligand contact to ATP.

It belongs to the DNA mismatch repair MutS family.

Its function is as follows. This protein is involved in the repair of mismatches in DNA. It is possible that it carries out the mismatch recognition step. This protein has a weak ATPase activity. The protein is DNA mismatch repair protein MutS of Anaplasma phagocytophilum (strain HZ).